Consider the following 63-residue polypeptide: Adipokinetic prohormone type 1 (63 aa).

A signal peptide spans 1 to 22 (MVQRCLVVALLVVVVAAALCSA). Pyrrolidone carboxylic acid is present on glutamine 23. The residue at position 32 (threonine 32) is a Threonine amide.

Belongs to the AKH/HRTH/RPCH family. As to quaternary structure, adipokinetic hormone precursor-related peptide (APRP) can form three type of disulfide-bond dimers: p1 (alpha-alpha), p2 (alpha-beta), and p3 (beta-beta).

The protein resides in the secreted. Functionally, this hormone, released from cells in the corpora cardiaca, causes release of diglycerides from the fat body and stimulation of muscles to use these diglycerides as an energy source during energy-demanding processes. This chain is Adipokinetic prohormone type 1, found in Schistocerca nitens (Vagrant locust).